Consider the following 313-residue polypeptide: Olfactory receptor 8B2 (313 aa).

Over 1–25 the chain is Extracellular; sequence MLARNNSLVTEFILAGLTDHPEFRQ. Asn5 carries N-linked (GlcNAc...) asparagine glycosylation. A helical membrane pass occupies residues 26–46; sequence PLFFLFLVIYIVTMVGNLGLI. Residues 47-54 lie on the Cytoplasmic side of the membrane; that stretch reads TLFGLNSH. The helical transmembrane segment at 55-75 threads the bilayer; the sequence is LHTPMYYFLFNLSFIDLCYSS. Residues 76-99 are Extracellular-facing; the sequence is VFTPKMLMNFVSKKNIISNVGCMT. Cys97 and Cys189 are disulfide-bonded. The chain crosses the membrane as a helical span at residues 100–120; that stretch reads RLFFFLFFVISECYMLTSMAY. Residues 121–139 are Cytoplasmic-facing; the sequence is DRYVAICNPLLYKVTMSHQ. The helical transmembrane segment at 140–160 threads the bilayer; sequence VCSMLTFAAYIMGLAGATAHT. The Extracellular segment spans residues 161-197; the sequence is GCMLRLTFCSANIINHYLCDILPLLQLSCTSTYVNEV. The helical transmembrane segment at 198 to 217 threads the bilayer; it reads VVLIVVGTNITVPSCTILIS. At 218–237 the chain is on the cytoplasmic side; the sequence is YVFIVTSILHIKSTQGRSKA. Residues 238-258 form a helical membrane-spanning segment; sequence FSTCSSHVIALSLFFGSAAFM. The Extracellular portion of the chain corresponds to 259-270; it reads YIKYSSGSMEQG. A helical transmembrane segment spans residues 271-291; sequence KVSSVFYTNVVPMLNPLIYSL. Over 292-313 the chain is Cytoplasmic; that stretch reads RNKDVKVALRKALIKIQRRNIF.

It belongs to the G-protein coupled receptor 1 family.

Its subcellular location is the cell membrane. Odorant receptor. The protein is Olfactory receptor 8B2 (OR8B2) of Homo sapiens (Human).